The sequence spans 243 residues: uncharacterized protein (243 aa).

The tract at residues 157 to 181 (SEETKEQPDATTSEKSRSPECPKTT) is disordered.

This is an uncharacterized protein from Rattus norvegicus (Rat).